A 115-amino-acid chain; its full sequence is MAIIPKNYARLESGYREKALKIYPWVCGRCSREFVYSNLRELTVHHIDHDHTNNPEDGSNWELLCLYCHDHEHSKYTEADQYGTTVIAGEDAQKDVGEAKYNPFADLKAMMNKKK.

Positions 27-75 (CGRCSREFVYSNLRELTVHHIDHDHTNNPEDGSNWELLCLYCHDHEHSK) constitute an HNH domain.

The protein belongs to the HNH nuclease family.

This chain is Putative HNH nuclease YajD (yajD), found in Escherichia coli O157:H7.